The sequence spans 214 residues: Adenylate kinase (214 aa).

Position 10 to 15 (10 to 15 (GAGKGT)) interacts with ATP. The interval 30-59 (STGDMLRAAIKAGTELGKQAKAVIDAGQLV) is NMP. Residues threonine 31, arginine 36, 57-59 (QLV), 85-88 (GFPR), and glutamine 92 each bind AMP. The tract at residues 122–159 (GRRAHLPSGRTYHVVYNPPKVEGKDDVTGEDLVVRDDD) is LID. Residues arginine 123 and 132–133 (TY) contribute to the ATP site. Residues arginine 156 and arginine 167 each coordinate AMP. Lysine 200 contacts ATP.

The protein belongs to the adenylate kinase family. Monomer.

The protein localises to the cytoplasm. The enzyme catalyses AMP + ATP = 2 ADP. Its pathway is purine metabolism; AMP biosynthesis via salvage pathway; AMP from ADP: step 1/1. In terms of biological role, catalyzes the reversible transfer of the terminal phosphate group between ATP and AMP. Plays an important role in cellular energy homeostasis and in adenine nucleotide metabolism. The chain is Adenylate kinase from Vibrio vulnificus (strain CMCP6).